Here is a 513-residue protein sequence, read N- to C-terminus: ATP synthase subunit alpha (513 aa).

Position 169–176 (169–176 (GDRQTGKT)) interacts with ATP.

Belongs to the ATPase alpha/beta chains family. In terms of assembly, F-type ATPases have 2 components, CF(1) - the catalytic core - and CF(0) - the membrane proton channel. CF(1) has five subunits: alpha(3), beta(3), gamma(1), delta(1), epsilon(1). CF(0) has three main subunits: a(1), b(2) and c(9-12). The alpha and beta chains form an alternating ring which encloses part of the gamma chain. CF(1) is attached to CF(0) by a central stalk formed by the gamma and epsilon chains, while a peripheral stalk is formed by the delta and b chains.

It is found in the cell inner membrane. It carries out the reaction ATP + H2O + 4 H(+)(in) = ADP + phosphate + 5 H(+)(out). Produces ATP from ADP in the presence of a proton gradient across the membrane. The alpha chain is a regulatory subunit. In Vesicomyosocius okutanii subsp. Calyptogena okutanii (strain HA), this protein is ATP synthase subunit alpha.